We begin with the raw amino-acid sequence, 235 residues long: 5'-methylthioadenosine/S-adenosylhomocysteine nucleosidase (235 aa).

Catalysis depends on Glu12, which acts as the Proton acceptor. Substrate-binding positions include Gly78, Ile152, and 173 to 174; that span reads ME. The Proton donor role is filled by Asp197.

Belongs to the PNP/UDP phosphorylase family. MtnN subfamily. As to quaternary structure, homodimer.

The catalysed reaction is S-adenosyl-L-homocysteine + H2O = S-(5-deoxy-D-ribos-5-yl)-L-homocysteine + adenine. The enzyme catalyses S-methyl-5'-thioadenosine + H2O = 5-(methylsulfanyl)-D-ribose + adenine. It carries out the reaction 5'-deoxyadenosine + H2O = 5-deoxy-D-ribose + adenine. Its pathway is amino-acid biosynthesis; L-methionine biosynthesis via salvage pathway; S-methyl-5-thio-alpha-D-ribose 1-phosphate from S-methyl-5'-thioadenosine (hydrolase route): step 1/2. Functionally, catalyzes the irreversible cleavage of the glycosidic bond in both 5'-methylthioadenosine (MTA) and S-adenosylhomocysteine (SAH/AdoHcy) to adenine and the corresponding thioribose, 5'-methylthioribose and S-ribosylhomocysteine, respectively. Also cleaves 5'-deoxyadenosine, a toxic by-product of radical S-adenosylmethionine (SAM) enzymes, into 5-deoxyribose and adenine. Thus, is required for in vivo function of the radical SAM enzymes biotin synthase and lipoic acid synthase, that are inhibited by 5'-deoxyadenosine accumulation. The polypeptide is 5'-methylthioadenosine/S-adenosylhomocysteine nucleosidase (Buchnera aphidicola subsp. Schizaphis graminum (strain Sg)).